The primary structure comprises 40 residues: Large ribosomal subunit protein bL36 (40 aa).

It belongs to the bacterial ribosomal protein bL36 family.

The sequence is that of Large ribosomal subunit protein bL36 from Coxiella burnetii (strain Dugway 5J108-111).